Here is a 1464-residue protein sequence, read N- to C-terminus: Collagen alpha-1(I) chain (1464 aa).

The signal sequence occupies residues 1 to 22 (MFSFVDLRLLLLLAATALLTHG). Positions 23–161 (QEEGQVEGQD…PPGLGGNFAP (139 aa)) are cleaved as a propeptide — N-terminal propeptide. The VWFC domain maps to 38 to 96 (ITCVQNGLRYHDRDVWKPEPCRICVCDNGKVLCDDVICDETKNCPGAEVPEGECCPVCP). The tract at residues 98–1214 (GSESPTDQET…PQEKAHDGGR (1117 aa)) is disordered. Over residues 138-153 (PGLPGPPGPPGPPGPP) the composition is skewed to pro residues. Pyrrolidone carboxylic acid is present on Gln-162. The segment at 162 to 178 (QLSYGYDEKSTGGISVP) is nonhelical region (N-terminal). Position 170 is an allysine (Lys-170). Ser-171 carries the post-translational modification Phosphoserine. The interval 179–1192 (GPMGPSGPRG…PGPPGPPGPP (1014 aa)) is triple-helical region. A 4-hydroxyproline mark is found at Pro-190, Pro-193, Pro-196, Pro-205, Pro-208, Pro-211, Pro-226, Pro-241, Pro-247, Pro-256, and Pro-262. Residues 198 to 217 (PQGFQGPPGEPGEPGASGPM) are compositionally biased toward low complexity. Residues 229–243 (NGDDGEAGKPGRPGE) show a composition bias toward basic and acidic residues. Lys-265 is modified (5-hydroxylysine; alternate). O-linked (Gal...) hydroxylysine; alternate glycosylation is present at Lys-265. Phosphoserine is present on Ser-271. Residues 279–295 (DAGPAGPKGEPGSPGEN) show a composition bias toward low complexity. Residues Pro-289, Pro-292, Pro-298, Pro-307, and Pro-313 each carry the 4-hydroxyproline modification. The span at 318–331 (PAGARGNDGATGAA) shows a compositional bias: low complexity. The segment covering 333 to 345 (PPGPTGPAGPPGF) has biased composition (pro residues). 4-hydroxyproline is present on residues Pro-334, Pro-343, Pro-346, Pro-373, Pro-376, Pro-388, Pro-394, Pro-403, Pro-409, Pro-412, and Pro-427. Low complexity predominate over residues 379–418 (AGAAGPAGNPGADGQPGAKGANGAPGIAGAPGFPGARGPS). Lys-430 is subject to 5-hydroxylysine. Residues Pro-436, Pro-439, Pro-451, Pro-460, Pro-475, Pro-481, Pro-490, and Pro-496 each carry the 4-hydroxyproline modification. Residues 448–457 (KGEPGPVGVQ) are compositionally biased toward low complexity. Residues 485 to 494 (GERGGPGSRG) show a composition bias toward gly residues. Position 505 is a 5-hydroxylysine (Lys-505). A 4-hydroxyproline mark is found at Pro-514, Pro-523, Pro-529, Pro-535, Pro-544, Pro-547, Pro-556, Pro-565, Pro-571, Pro-583, Pro-592, Pro-601, Pro-604, Pro-622, Pro-640, Pro-646, Pro-652, Pro-658, Pro-664, Pro-670, Pro-682, Pro-691, Pro-703, Pro-715, Pro-718, Pro-724, Pro-730, and Pro-739. Over residues 538–564 (KGLTGSPGSPGPDGKTGPPGPAGQDGR) the composition is skewed to low complexity. The segment covering 573 to 592 (ARGQAGVMGFPGPKGAAGEP) has biased composition (low complexity). Over residues 634-661 (QGPAGSPGFQGLPGPAGPPGEAGKPGEQ) the composition is skewed to low complexity. The span at 696 to 724 (PRGANGAPGNDGAKGDAGAPGAPGSQGAP) shows a compositional bias: low complexity. Positions 745–747 (RGD) match the Cell attachment site motif. Lys-751 bears the 5-hydroxylysine mark. A 4-hydroxyproline mark is found at Pro-757, Pro-772, and Pro-778. Over residues 784 to 798 (SGPSGPAGPTGARGA) the composition is skewed to low complexity. The residue at position 787 (Ser-787) is a Phosphoserine. Residues Pro-799, Pro-805, Pro-808, Pro-817, Pro-823, Pro-841, Pro-850, and Pro-859 each carry the 4-hydroxyproline modification. Over residues 811–838 (AGFAGPPGADGQPGAKGEPGDAGAKGDA) the composition is skewed to low complexity. A compositionally biased stretch (pro residues) spans 840–852 (PPGPAGPAGPPGP). Positions 853-883 (IGNVGAPGAKGARGSAGPPGATGFPGAAGRV) are enriched in low complexity. A 5-hydroxylysine modification is found at Lys-862. 2 positions are modified to 4-hydroxyproline: Pro-871 and Pro-877. Pro-885 is subject to 3-hydroxyproline. Residues Pro-886, Pro-895, Pro-898, Pro-919, Pro-928, Pro-937, Pro-946, Pro-964, Pro-973, Pro-976, Pro-982, Pro-997, Pro-1003, Pro-1009, Pro-1018, and Pro-1024 each carry the 4-hydroxyproline modification. The span at 912-921 (ETGPAGRPGE) shows a compositional bias: low complexity. Positions 931-955 (AGEKGSPGADGPAGAPGTPGPQGIA) are enriched in low complexity. A compositionally biased stretch (pro residues) spans 996-1006 (PPGPMGPPGLA). Lys-1033 bears the 5-hydroxylysine mark. Residues 1042–1057 (AGPPGAPGAPGAPGPV) are compositionally biased toward pro residues. A 4-hydroxyproline mark is found at Pro-1045, Pro-1048, and Pro-1051. The segment covering 1078 to 1092 (VGPVGARGPAGPQGP) has biased composition (low complexity). The short motif at 1093 to 1095 (RGD) is the Cell attachment site element. The span at 1093–1107 (RGDKGETGEQGDRGI) shows a compositional bias: basic and acidic residues. Lys-1096 is subject to 5-hydroxylysine. 5-hydroxylysine; alternate is present on Lys-1108. O-linked (Gal...) hydroxylysine; alternate glycosylation occurs at Lys-1108. A 4-hydroxyproline mark is found at Pro-1120, Pro-1123, Pro-1126, Pro-1144, and Pro-1159. Over residues 1126 to 1159 (PGEQGPSGASGPAGPRGPPGSAGAPGKDGLNGLP) the composition is skewed to low complexity. Pro-1164 is modified (3-hydroxyproline). A 4-hydroxyproline modification is found at Pro-1165. Pro residues predominate over residues 1177-1192 (VGPPGPPGPPGPPGPP). Pro-1179 bears the 3-hydroxyproline mark. A 4-hydroxyproline modification is found at Pro-1180. Pro-1182 is subject to 3-hydroxyproline. At Pro-1183 the chain carries 4-hydroxyproline. Position 1185 is a 3-hydroxyproline (Pro-1185). 4-hydroxyproline is present on residues Pro-1186, Pro-1189, and Pro-1192. The nonhelical region (C-terminal) stretch occupies residues 1193–1218 (SAGFDFSFLPQPPQEKAHDGGRYYRA). Lys-1208 bears the Allysine mark. The propeptide at 1219–1464 (DDANVVRDRD…GFDVGPVCFL (246 aa)) is C-terminal propeptide. The 236-residue stretch at 1229–1464 (LEVDTTLKSL…GFDVGPVCFL (236 aa)) folds into the Fibrillar collagen NC1 domain. Cystine bridges form between Cys-1259–Cys-1291, Cys-1299–Cys-1462, and Cys-1370–Cys-1415. Asp-1277, Asn-1279, Gln-1280, Cys-1282, and Asp-1285 together coordinate Ca(2+). Asn-1365 carries an N-linked (GlcNAc...) asparagine glycan.

It belongs to the fibrillar collagen family. In terms of assembly, trimers of one alpha 2(I) and two alpha 1(I) chains. Interacts with MRC2. Interacts with TRAM2. Interacts with MFAP4 in a Ca (2+)-dependent manner. In terms of processing, contains mostly 4-hydroxyproline. Proline residues at the third position of the tripeptide repeating unit (G-X-Y) are hydroxylated in some or all of the chains. Post-translationally, contains 3-hydroxyproline at a few sites. This modification occurs on the first proline residue in the sequence motif Gly-Pro-Hyp, where Hyp is 4-hydroxyproline. Lysine residues at the third position of the tripeptide repeating unit (G-X-Y) are 5-hydroxylated in some or all of the chains. In terms of processing, O-glycosylated on hydroxylated lysine residues. The O-linked glycan consists of a Glc-Gal disaccharide. In terms of tissue distribution, forms the fibrils of tendon, ligaments and bones. In bones the fibrils are mineralized with calcium hydroxyapatite.

The protein resides in the secreted. The protein localises to the extracellular space. It localises to the extracellular matrix. Type I collagen is a member of group I collagen (fibrillar forming collagen). The protein is Collagen alpha-1(I) chain (COL1A1) of Homo sapiens (Human).